Reading from the N-terminus, the 271-residue chain is Phosphonates import ATP-binding protein PhnC 2 (271 aa).

Residues 2–245 (LVVEGLTCRF…IARELYDLEA (244 aa)) enclose the ABC transporter domain. Position 34–41 (34–41 (GRSGAGKS)) interacts with ATP.

Belongs to the ABC transporter superfamily. Phosphonates importer (TC 3.A.1.9.1) family. As to quaternary structure, the complex is composed of two ATP-binding proteins (PhnC), two transmembrane proteins (PhnE) and a solute-binding protein (PhnD).

The protein resides in the cell inner membrane. It catalyses the reaction phosphonate(out) + ATP + H2O = phosphonate(in) + ADP + phosphate + H(+). In terms of biological role, part of the ABC transporter complex PhnCDE involved in phosphonates import. Responsible for energy coupling to the transport system. This Rhodopseudomonas palustris (strain BisB18) protein is Phosphonates import ATP-binding protein PhnC 2.